A 346-amino-acid chain; its full sequence is Thioredoxin domain-containing protein R362 (346 aa).

A Thioredoxin domain is found at 212 to 345 (LTNLSNTEAN…IVKFIDETMS (134 aa)).

It localises to the virion. The chain is Thioredoxin domain-containing protein R362 from Acanthamoeba polyphaga (Amoeba).